The primary structure comprises 518 residues: 2-isopropylmalate synthase (518 aa).

The 265-residue stretch at 5 to 269 (IIVLDTTLRD…STNVRLKELI (265 aa)) folds into the Pyruvate carboxyltransferase domain. 4 residues coordinate Mn(2+): aspartate 14, histidine 204, histidine 206, and asparagine 240. Residues 397-518 (ELDSFQVVTN…HDSQAPVSAR (122 aa)) form a regulatory domain region.

It belongs to the alpha-IPM synthase/homocitrate synthase family. LeuA type 1 subfamily. Homodimer. Mn(2+) serves as cofactor.

Its subcellular location is the cytoplasm. It catalyses the reaction 3-methyl-2-oxobutanoate + acetyl-CoA + H2O = (2S)-2-isopropylmalate + CoA + H(+). Its pathway is amino-acid biosynthesis; L-leucine biosynthesis; L-leucine from 3-methyl-2-oxobutanoate: step 1/4. Catalyzes the condensation of the acetyl group of acetyl-CoA with 3-methyl-2-oxobutanoate (2-ketoisovalerate) to form 3-carboxy-3-hydroxy-4-methylpentanoate (2-isopropylmalate). This Geobacillus sp. (strain Y412MC10) protein is 2-isopropylmalate synthase.